Reading from the N-terminus, the 283-residue chain is 4-hydroxy-3-methylbut-2-enyl diphosphate reductase (283 aa).

[4Fe-4S] cluster is bound at residue Cys12. Positions 41 and 74 each coordinate (2E)-4-hydroxy-3-methylbut-2-enyl diphosphate. His41 and His74 together coordinate dimethylallyl diphosphate. The isopentenyl diphosphate site is built by His41 and His74. Cys96 is a [4Fe-4S] cluster binding site. His124 lines the (2E)-4-hydroxy-3-methylbut-2-enyl diphosphate pocket. His124 lines the dimethylallyl diphosphate pocket. Residue His124 participates in isopentenyl diphosphate binding. Catalysis depends on Glu126, which acts as the Proton donor. Thr161 lines the (2E)-4-hydroxy-3-methylbut-2-enyl diphosphate pocket. Cys189 provides a ligand contact to [4Fe-4S] cluster. Residues Ser217, Asn219, and Ser261 each contribute to the (2E)-4-hydroxy-3-methylbut-2-enyl diphosphate site. Dimethylallyl diphosphate is bound by residues Ser217, Asn219, and Ser261. Positions 217, 219, and 261 each coordinate isopentenyl diphosphate.

The protein belongs to the IspH family. It depends on [4Fe-4S] cluster as a cofactor.

It catalyses the reaction isopentenyl diphosphate + 2 oxidized [2Fe-2S]-[ferredoxin] + H2O = (2E)-4-hydroxy-3-methylbut-2-enyl diphosphate + 2 reduced [2Fe-2S]-[ferredoxin] + 2 H(+). The enzyme catalyses dimethylallyl diphosphate + 2 oxidized [2Fe-2S]-[ferredoxin] + H2O = (2E)-4-hydroxy-3-methylbut-2-enyl diphosphate + 2 reduced [2Fe-2S]-[ferredoxin] + 2 H(+). Its pathway is isoprenoid biosynthesis; dimethylallyl diphosphate biosynthesis; dimethylallyl diphosphate from (2E)-4-hydroxy-3-methylbutenyl diphosphate: step 1/1. It functions in the pathway isoprenoid biosynthesis; isopentenyl diphosphate biosynthesis via DXP pathway; isopentenyl diphosphate from 1-deoxy-D-xylulose 5-phosphate: step 6/6. Its function is as follows. Catalyzes the conversion of 1-hydroxy-2-methyl-2-(E)-butenyl 4-diphosphate (HMBPP) into a mixture of isopentenyl diphosphate (IPP) and dimethylallyl diphosphate (DMAPP). Acts in the terminal step of the DOXP/MEP pathway for isoprenoid precursor biosynthesis. This is 4-hydroxy-3-methylbut-2-enyl diphosphate reductase from Anaeromyxobacter sp. (strain Fw109-5).